The sequence spans 248 residues: Large ribosomal subunit protein uL30 (248 aa).

At M1 the chain carries N-acetylmethionine. Tandem repeats lie at residues 7–18 (KKKKVPAVPETL), 19–30 (KKKRKNFAELKI), 31–42 (KRLRKKFAQKML), and 43–54 (RKARRKLIYEKA). Residues 7–54 (KKKKVPAVPETLKKKRKNFAELKIKRLRKKFAQKMLRKARRKLIYEKA) form a 4 X 12 AA tandem repeats region. Position 17 is a phosphothreonine (T17). K124 is subject to N6-acetyllysine. Residue K127 is modified to N6-succinyllysine. Y139 carries the post-translational modification Phosphotyrosine.

The protein belongs to the universal ribosomal protein uL30 family. In terms of assembly, component of the large ribosomal subunit. Homodimer. Interacts with DHX33.

It localises to the cytoplasm. Component of the large ribosomal subunit. The ribosome is a large ribonucleoprotein complex responsible for the synthesis of proteins in the cell. Binds to G-rich structures in 28S rRNA and in mRNAs. Plays a regulatory role in the translation apparatus; inhibits cell-free translation of mRNAs. The sequence is that of Large ribosomal subunit protein uL30 (RPL7) from Bos taurus (Bovine).